A 263-amino-acid chain; its full sequence is Palmitoyltransferase ZDHHC22 (263 aa).

Residues 1-9 lie on the Cytoplasmic side of the membrane; it reads MLALRLLNV. Residues 10 to 30 form a helical membrane-spanning segment; it reads VAPAYFLCISLVTFVLQLFLF. The Lumenal segment spans residues 31–48; the sequence is LPSMREDPAAARLFSPAL. Residues 49–69 form a helical membrane-spanning segment; it reads LHGALFLFLSANALGNYVLVI. At 70-125 the chain is on the cytoplasmic side; the sequence is QNSPDDLGACQGASARKTPCPSPSTHFCRVCARVTLRHDHHCFFTGNCIGSRNMRN. Positions 92 to 131 constitute a DHHC domain; the sequence is PSTHFCRVCARVTLRHDHHCFFTGNCIGSRNMRNFVLFCL. Cys-111 serves as the catalytic S-palmitoyl cysteine intermediate. 2 helical membrane-spanning segments follow: residues 126–146 and 147–167; these read FVLFCLYTSLACLYSMVAGVA and YISAVLSISFAHPLAFLTLLP. Over 168–182 the chain is Cytoplasmic; that stretch reads TSISQFFSGAVLGSE. Residues 183–203 form a helical membrane-spanning segment; the sequence is MFVILMLYLWFAIGLACAGFC. At 204–263 the chain is on the lumenal side; sequence CHQLLLILRGQTRHQVRKGVAVRARPWRKNLQEVFGKRWLLGLLVPMFNVGSESSKQQDK.

It belongs to the DHHC palmitoyltransferase family. In terms of assembly, interacts with CNN3. As to expression, widely expressed.

The protein resides in the endoplasmic reticulum membrane. It localises to the golgi apparatus membrane. It catalyses the reaction L-cysteinyl-[protein] + hexadecanoyl-CoA = S-hexadecanoyl-L-cysteinyl-[protein] + CoA. In terms of biological role, palmitoyltransferase that could catalyze the addition of palmitate onto various protein substrates and be involved in a variety of cellular processes. Catalyzes the palmitoylation of KCNMA1, regulating localization of KCNMA1 to the plasma membrane. Might also mediate palmitoylation of CNN3. The polypeptide is Palmitoyltransferase ZDHHC22 (Homo sapiens (Human)).